Consider the following 236-residue polypeptide: Phosphoribosylaminoimidazole-succinocarboxamide synthase (236 aa).

This sequence belongs to the SAICAR synthetase family.

The catalysed reaction is 5-amino-1-(5-phospho-D-ribosyl)imidazole-4-carboxylate + L-aspartate + ATP = (2S)-2-[5-amino-1-(5-phospho-beta-D-ribosyl)imidazole-4-carboxamido]succinate + ADP + phosphate + 2 H(+). It participates in purine metabolism; IMP biosynthesis via de novo pathway; 5-amino-1-(5-phospho-D-ribosyl)imidazole-4-carboxamide from 5-amino-1-(5-phospho-D-ribosyl)imidazole-4-carboxylate: step 1/2. The protein is Phosphoribosylaminoimidazole-succinocarboxamide synthase of Chlorobium limicola (strain DSM 245 / NBRC 103803 / 6330).